We begin with the raw amino-acid sequence, 2156 residues long: MAM and LDL-receptor class A domain-containing protein 1 (2156 aa).

The N-terminal stretch at 1-31 (MLFFLDRMLAFPMNETFCCLWIACVFNSTLA) is a signal peptide. Residues 32-2076 (QQGTESFQCD…FTYAQNNTWT (2045 aa)) lie on the Vesicular side of the membrane. The LDL-receptor class A 1 domain occupies 33-68 (QGTESFQCDNGVSLPPDSICDFTDQCGDSSDERHCL). 2 disulfide bridges follow: Cys-40-Cys-58 and Cys-52-Cys-67. 2 MAM domains span residues 71 to 229 (ERCD…GCLP) and 268 to 427 (QACG…ACGQ). The region spanning 433 to 471 (LCSADEFPCTSGQCIAKESVCDSRQDCSDESDEDPATCS) is the LDL-receptor class A 2 domain. 3 cysteine pairs are disulfide-bonded: Cys-434–Cys-446, Cys-441–Cys-459, and Cys-453–Cys-470. MAM domains lie at 474–637 (LTCD…ECEI) and 652–816 (SKCD…NCTL). N-linked (GlcNAc...) asparagine glycosylation is present at Asn-813. In terms of domain architecture, LDL-receptor class A 3 spans 822–860 (SCEGLDHFWCRHTRACIEKLRLCDLVDDCGDRTDEVNCA). 3 disulfide bridges follow: Cys-823–Cys-837, Cys-831–Cys-850, and Cys-844–Cys-859. The 162-residue stretch at 863-1024 (LQCNFETGIC…DDLSFMDCTL (162 aa)) folds into the MAM 5 domain. A glycan (N-linked (GlcNAc...) asparagine) is linked at Asn-1049. Residues 1049 to 1086 (NCTDNEFICRSDGHCIEKMQKCDFKYDCPDKSDEASCV) form the LDL-receptor class A 4 domain. 3 disulfide bridges follow: Cys-1050–Cys-1063, Cys-1057–Cys-1076, and Cys-1070–Cys-1085. Residues 1088 to 1256 (EVCSFEKRSL…DDISFQDCSP (169 aa)) enclose the MAM 6 domain. The N-linked (GlcNAc...) asparagine glycan is linked to Asn-1199. An LDL-receptor class A 5 domain is found at 1263–1301 (KCTDHEFMCANKHCIAKDKLCDFVNDCADNSDETTFICR). Disulfide bonds link Cys-1264–Cys-1276, Cys-1271–Cys-1289, and Cys-1283–Cys-1300. The 161-residue stretch at 1305-1465 (GRCDFEFDLC…DIVLTENCLS (161 aa)) folds into the MAM 7 domain. The N-linked (GlcNAc...) asparagine glycan is linked to Asn-1414. One can recognise an LDL-receptor class A 6 domain in the interval 1482–1518 (FCPLGYRECHNGKCYRLEQSCNFVDNCGDNTDENECG). 3 disulfide bridges follow: Cys-1483–Cys-1495, Cys-1490–Cys-1508, and Cys-1502–Cys-1517. The 158-residue stretch at 1519-1676 (SSCTFEKGWC…DDIEFKNCTT (158 aa)) folds into the MAM 8 domain. The 38-residue stretch at 1683 to 1720 (LCPEITDFLCRDKKCIASHLLCDYKPDCSDRSDEAHCA) folds into the LDL-receptor class A 7 domain. Cystine bridges form between Cys-1684–Cys-1697, Cys-1692–Cys-1710, and Cys-1704–Cys-1719. One can recognise an MAM 9 domain in the interval 1727 to 1892 (GSCNFETSSG…DISFTPECVT (166 aa)). 3 LDL-receptor class A domains span residues 1902–1939 (PCEADQFSCIYTLQCVPLSGKCDGHEDCIDGSDEMDCP), 1946–1982 (LCSNMEFPCSTDECIPSLLLCDGVPDCHFNEDELICS), and 1985–2023 (SCSNGALVCASSNSCIPAHQRCDGFADCMDFQLDESSCS). Intrachain disulfides connect Cys-1903-Cys-1916, Cys-1910-Cys-1929, Cys-1923-Cys-1938, Cys-1947-Cys-1959, Cys-1954-Cys-1972, Cys-1966-Cys-1981, Cys-1986-Cys-1999, Cys-1993-Cys-2012, Cys-2006-Cys-2022, Cys-2025-Cys-2036, Cys-2030-Cys-2045, and Cys-2047-Cys-2056. Positions 2024-2057 (ECPLNYCRNGGTCVVEKNGPMCRCRQGWKGNRCH) constitute an EGF-like domain. Residues 2077–2097 (LLGIGLAFLMTHITVAVLCFL) traverse the membrane as a helical segment. The Cytoplasmic segment spans residues 2098–2156 (ANRKVPIRKTEGSGNCAFVNPVYGNWSNPEKTESSVYSFSNPLYGTTSGSLETLSHHLK).

In terms of assembly, interacts with FGF19. Strongly expressed in the small intestine.

It is found in the cytoplasmic vesicle membrane. In terms of biological role, enhances production and/or transport of FGF19 and thus has a role in regulation of bile acid synthesis. This Homo sapiens (Human) protein is MAM and LDL-receptor class A domain-containing protein 1.